The chain runs to 227 residues: uncharacterized protein (227 aa).

A helical transmembrane segment spans residues 7–26 (IITLTILIFISGLLTAFLLL).

The protein localises to the membrane. This is an uncharacterized protein from Haemophilus influenzae (strain ATCC 51907 / DSM 11121 / KW20 / Rd).